The following is a 480-amino-acid chain: Flotillin-like protein 2 (480 aa).

A lipid anchor (S-palmitoyl cysteine) is attached at Cys37. Positions 237-257 form a coiled coil; sequence ENQREAEVAQANSELAKKKAA.

It belongs to the band 7/mec-2 family. Flotillin subfamily. May be palmitoylated. In terms of tissue distribution, expressed in flowers in green pods. Primarily expressed in vascular tissues. Upon induction of nodulation, expansion of expression in the root cortex in the region of elongating root hairs, which will eventually become colonized by bacteria. Expressed in the infection zone in nodules.

Its subcellular location is the cell membrane. It localises to the membrane. It is found in the caveola. In terms of biological role, may act as a scaffolding protein within caveolar membranes, functionally participating in formation of caveolae or caveolae-like vesicles. Required for early symbiotic events and nodules formation. This Medicago truncatula (Barrel medic) protein is Flotillin-like protein 2 (FLOT2).